The sequence spans 277 residues: Large ribosomal subunit protein uL2 (277 aa).

Residues Arg-216–Gly-277 form a disordered region.

The protein belongs to the universal ribosomal protein uL2 family. Part of the 50S ribosomal subunit. Forms a bridge to the 30S subunit in the 70S ribosome.

Functionally, one of the primary rRNA binding proteins. Required for association of the 30S and 50S subunits to form the 70S ribosome, for tRNA binding and peptide bond formation. It has been suggested to have peptidyltransferase activity; this is somewhat controversial. Makes several contacts with the 16S rRNA in the 70S ribosome. The chain is Large ribosomal subunit protein uL2 from Acidiphilium cryptum (strain JF-5).